The chain runs to 591 residues: Aspartate--tRNA(Asp/Asn) ligase (591 aa).

An L-aspartate-binding site is contributed by Glu174. Residues 198-201 (QLFK) are aspartate. Arg220 provides a ligand contact to L-aspartate. ATP contacts are provided by residues 220 to 222 (RDE) and Gln229. His450 is an L-aspartate binding site. Glu483 provides a ligand contact to ATP. Residue Arg490 participates in L-aspartate binding. ATP is bound at residue 535–538 (GLDR).

Belongs to the class-II aminoacyl-tRNA synthetase family. Type 1 subfamily. As to quaternary structure, homodimer.

Its subcellular location is the cytoplasm. It carries out the reaction tRNA(Asx) + L-aspartate + ATP = L-aspartyl-tRNA(Asx) + AMP + diphosphate. Aspartyl-tRNA synthetase with relaxed tRNA specificity since it is able to aspartylate not only its cognate tRNA(Asp) but also tRNA(Asn). Reaction proceeds in two steps: L-aspartate is first activated by ATP to form Asp-AMP and then transferred to the acceptor end of tRNA(Asp/Asn). The protein is Aspartate--tRNA(Asp/Asn) ligase of Pseudomonas fluorescens (strain ATCC BAA-477 / NRRL B-23932 / Pf-5).